A 190-amino-acid polypeptide reads, in one-letter code: Potassium-transporting ATPase KdpC subunit (190 aa).

The chain crosses the membrane as a helical span at residues 10-30 (TFLFLLLITGGVYPLLTTALG).

This sequence belongs to the KdpC family. In terms of assembly, the system is composed of three essential subunits: KdpA, KdpB and KdpC.

It localises to the cell inner membrane. Functionally, part of the high-affinity ATP-driven potassium transport (or Kdp) system, which catalyzes the hydrolysis of ATP coupled with the electrogenic transport of potassium into the cytoplasm. This subunit acts as a catalytic chaperone that increases the ATP-binding affinity of the ATP-hydrolyzing subunit KdpB by the formation of a transient KdpB/KdpC/ATP ternary complex. In Shigella flexneri serotype 5b (strain 8401), this protein is Potassium-transporting ATPase KdpC subunit.